The sequence spans 478 residues: tRNA(Ile)-lysidine synthase (478 aa).

27–32 contributes to the ATP binding site; that stretch reads SGGSDS.

This sequence belongs to the tRNA(Ile)-lysidine synthase family.

The protein resides in the cytoplasm. The enzyme catalyses cytidine(34) in tRNA(Ile2) + L-lysine + ATP = lysidine(34) in tRNA(Ile2) + AMP + diphosphate + H(+). Its function is as follows. Ligates lysine onto the cytidine present at position 34 of the AUA codon-specific tRNA(Ile) that contains the anticodon CAU, in an ATP-dependent manner. Cytidine is converted to lysidine, thus changing the amino acid specificity of the tRNA from methionine to isoleucine. The polypeptide is tRNA(Ile)-lysidine synthase (Rickettsia rickettsii (strain Iowa)).